A 231-amino-acid polypeptide reads, in one-letter code: L-ribulose-5-phosphate 4-epimerase (231 aa).

Substrate is bound by residues 27-28, 44-45, and 74-75; these read GN, SG, and SS. Zn(2+) contacts are provided by D76, H95, and H97. The active-site Proton donor/acceptor is D120. H171 is a binding site for Zn(2+). Catalysis depends on Y229, which acts as the Proton donor/acceptor.

Belongs to the aldolase class II family. AraD/FucA subfamily. Homotetramer. The cofactor is Zn(2+).

The catalysed reaction is L-ribulose 5-phosphate = D-xylulose 5-phosphate. The protein operates within carbohydrate degradation; L-arabinose degradation via L-ribulose; D-xylulose 5-phosphate from L-arabinose (bacterial route): step 3/3. Functionally, involved in the degradation of L-arabinose. Catalyzes the interconversion of L-ribulose 5-phosphate (LRu5P) and D-xylulose 5-phosphate (D-Xu5P) via a retroaldol/aldol mechanism (carbon-carbon bond cleavage analogous to a class II aldolase reaction). The chain is L-ribulose-5-phosphate 4-epimerase from Salmonella typhimurium (strain LT2 / SGSC1412 / ATCC 700720).